The primary structure comprises 151 residues: MVKVESFELDHTKVKAPYVRKAGIKIGPKGDIVSKFDLRFVQPNKELLSDKGMHTLEHFLAGFMREKLDDVIDISPMGCKTGFYLTSFGDINVKDIIEALEYSLSKVLEQEEIPAANELQCGSAKLHSLELAKSHAKQVLENGISDKFYVE.

The Fe cation site is built by His-54, His-58, and Cys-121.

Belongs to the LuxS family. As to quaternary structure, homodimer. Fe cation serves as cofactor.

It catalyses the reaction S-(5-deoxy-D-ribos-5-yl)-L-homocysteine = (S)-4,5-dihydroxypentane-2,3-dione + L-homocysteine. Functionally, involved in the synthesis of autoinducer 2 (AI-2) which is secreted by bacteria and is used to communicate both the cell density and the metabolic potential of the environment. The regulation of gene expression in response to changes in cell density is called quorum sensing. Catalyzes the transformation of S-ribosylhomocysteine (RHC) to homocysteine (HC) and 4,5-dihydroxy-2,3-pentadione (DPD). The protein is S-ribosylhomocysteine lyase of Clostridium perfringens (strain ATCC 13124 / DSM 756 / JCM 1290 / NCIMB 6125 / NCTC 8237 / Type A).